A 598-amino-acid polypeptide reads, in one-letter code: Glutamine--fructose-6-phosphate aminotransferase [isomerizing] (598 aa).

Residue C2 is the Nucleophile; for GATase activity of the active site. The region spanning 2 to 219 (CGIIGYIGPR…DGEYGIVSKD (218 aa)) is the Glutamine amidotransferase type-2 domain. SIS domains are found at residues 280–420 (VAEL…LVGI) and 449–588 (IAVK…PDRP). K593 (for Fru-6P isomerization activity) is an active-site residue.

In terms of assembly, homodimer.

The protein resides in the cytoplasm. The catalysed reaction is D-fructose 6-phosphate + L-glutamine = D-glucosamine 6-phosphate + L-glutamate. Functionally, catalyzes the first step in hexosamine metabolism, converting fructose-6P into glucosamine-6P using glutamine as a nitrogen source. This chain is Glutamine--fructose-6-phosphate aminotransferase [isomerizing], found in Pyrococcus horikoshii (strain ATCC 700860 / DSM 12428 / JCM 9974 / NBRC 100139 / OT-3).